The chain runs to 49 residues: QEEPCATGPCCRRCKFKRAGKVCRVARGDWNDDYCTGKSCDCPKNPWNG.

Residues Gln1 to Gly49 form the Disintegrin domain. Disulfide bonds link Cys5–Cys14, Cys10–Cys35, Cys11–Cys40, and Cys23–Cys42. A Cell attachment site motif is present at residues Arg27–Asp29.

The protein belongs to the venom metalloproteinase (M12B) family. P-II subfamily. P-IIa sub-subfamily. Monomer. Expressed by the venom gland.

Its subcellular location is the secreted. Functionally, is a potent inhibitor of ADP-induced platelet aggregation. Acts by binding to alpha-IIb/beta-3 (ITGA2B/ITGB3) receptor on the platelet surface. Binds with the same high affinity to resting and activated platelets. Also binds the alpha-4/beta-1 (ITGA4/ITGB1) integrin. Is a potent inhibitor of human and murine melanoma metastases in mouse model systems, also due to the inhibition of binding between the alpha-4/beta-1 integrin and the vascular cell adhesion protein VCAM1. Reacts neither with the integrin alpha-V/beta-3 (ITGAV/ITGB3) vitronectin receptor nor with the integrin alpha-5/beta-1 (ITGA5/ITGB1) fibronectin receptor. Has no effect on cell proliferation or angiogenesis. Specifically inhibits cell migration on fibronectin, but not that on collagen IV or laminin. May involve fibronectin-binding integrins that mediate cell migration. The sequence is that of Disintegrin eristostatin from Eristicophis macmahoni (Leaf-nosed viper).